The sequence spans 424 residues: Nuclear hormone receptor family member nhr-55 (424 aa).

Residues 1–19 are compositionally biased toward low complexity; sequence MNSPSSSSSFCSSSSSPSS. Positions 1-20 are disordered; the sequence is MNSPSSSSSFCSSSSSPSSL. The segment at residues 25–100 is a DNA-binding region (nuclear receptor); it reads PDTCQVCGQK…VGMTIENFQF (76 aa). 2 consecutive NR C4-type zinc fingers follow at residues 28 to 55 and 64 to 88; these read CQVC…FRRC and CRRN…LKKC. The NR LBD domain maps to 169–424; it reads EVPLHTPNAL…FSHPEVFIDL (256 aa).

It belongs to the nuclear hormone receptor family.

It localises to the nucleus. In terms of biological role, orphan nuclear receptor. The polypeptide is Nuclear hormone receptor family member nhr-55 (nhr-55) (Caenorhabditis elegans).